The chain runs to 80 residues: Putative membrane protein insertion efficiency factor (80 aa).

The segment at 61 to 80 is disordered; the sequence is KTGKDPVPDRFSLKRNQEGE. A compositionally biased stretch (basic and acidic residues) spans 62–80; sequence TGKDPVPDRFSLKRNQEGE.

The protein belongs to the UPF0161 family.

It localises to the cell membrane. Functionally, could be involved in insertion of integral membrane proteins into the membrane. This is Putative membrane protein insertion efficiency factor from Streptococcus pneumoniae (strain P1031).